Reading from the N-terminus, the 298-residue chain is dTDP-4-dehydrorhamnose reductase (298 aa).

NADH-binding positions include Gly-10–Val-12, Asp-35–Leu-36, and Ala-59–Thr-61. Residues Gln-11–Val-12, Asp-35–Leu-36, Ala-59–Thr-61, and Tyr-98 contribute to the NADPH site. Thr-100 to Asp-101 serves as a coordination point for dTDP-beta-L-rhamnose. 2 residues coordinate NADH: Tyr-124 and Lys-128. Residues Tyr-124 and Lys-128 each coordinate NADPH. Tyr-124 (proton donor/acceptor) is an active-site residue. Residue Trp-149 coordinates dTDP-beta-L-rhamnose.

This sequence belongs to the dTDP-4-dehydrorhamnose reductase family. In terms of assembly, homodimer. Mg(2+) serves as cofactor.

The catalysed reaction is dTDP-beta-L-rhamnose + NADP(+) = dTDP-4-dehydro-beta-L-rhamnose + NADPH + H(+). It functions in the pathway carbohydrate biosynthesis; dTDP-L-rhamnose biosynthesis. Its pathway is bacterial outer membrane biogenesis; LPS O-antigen biosynthesis. In terms of biological role, involved in the biosynthesis of the dTDP-L-rhamnose which is an important component of lipopolysaccharide (LPS). Catalyzes the reduction of dTDP-6-deoxy-L-lyxo-4-hexulose to yield dTDP-L-rhamnose. The sequence is that of dTDP-4-dehydrorhamnose reductase from Burkholderia thailandensis (strain ATCC 700388 / DSM 13276 / CCUG 48851 / CIP 106301 / E264).